Reading from the N-terminus, the 358-residue chain is Peptide chain release factor 1 (358 aa).

Position 233 is an N5-methylglutamine (Q233).

It belongs to the prokaryotic/mitochondrial release factor family. Methylated by PrmC. Methylation increases the termination efficiency of RF1.

The protein resides in the cytoplasm. Peptide chain release factor 1 directs the termination of translation in response to the peptide chain termination codons UAG and UAA. This chain is Peptide chain release factor 1, found in Lachnoclostridium phytofermentans (strain ATCC 700394 / DSM 18823 / ISDg) (Clostridium phytofermentans).